A 251-amino-acid polypeptide reads, in one-letter code: Tropomyosin-2 (251 aa).

Positions 1–251 (MSGEEKLGKL…DTVADEPDDE (251 aa)) form a coiled coil.

The protein belongs to the tropomyosin family. Homodimer. Striated muscle specific.

This Podocoryna carnea (Hydrozoan) protein is Tropomyosin-2 (TPM2).